The chain runs to 285 residues: Bifunctional protein FolD (285 aa).

Residues 165-167 (GRS) and serine 190 each bind NADP(+).

The protein belongs to the tetrahydrofolate dehydrogenase/cyclohydrolase family. As to quaternary structure, homodimer.

The catalysed reaction is (6R)-5,10-methylene-5,6,7,8-tetrahydrofolate + NADP(+) = (6R)-5,10-methenyltetrahydrofolate + NADPH. It catalyses the reaction (6R)-5,10-methenyltetrahydrofolate + H2O = (6R)-10-formyltetrahydrofolate + H(+). The protein operates within one-carbon metabolism; tetrahydrofolate interconversion. Catalyzes the oxidation of 5,10-methylenetetrahydrofolate to 5,10-methenyltetrahydrofolate and then the hydrolysis of 5,10-methenyltetrahydrofolate to 10-formyltetrahydrofolate. The sequence is that of Bifunctional protein FolD from Burkholderia cenocepacia (strain HI2424).